The chain runs to 269 residues: JmjC domain-containing protein 8 (269 aa).

A signal peptide spans 1 to 24; sequence MAAAGRFGLLLLIVLWTMVTVVLP. N-linked (GlcNAc...) asparagine glycosylation is found at N135, N145, and N214. The 123-residue stretch at 147-269 folds into the JmjC domain; that stretch reads TEWAPLFQHY…TSVFISTFLG (123 aa).

As to quaternary structure, oligomer. Dimer. Interacts with PKM; regulates angiogenesis and metabolism. Post-translationally, N-glycosylated.

The protein localises to the endoplasmic reticulum lumen. Its subcellular location is the cytoplasm. In terms of biological role, functions as a positive regulator of TNF-induced NF-kappaB signaling. Regulates angiogenesis and cellular metabolism through interaction with PKM. This Rattus norvegicus (Rat) protein is JmjC domain-containing protein 8.